The primary structure comprises 620 residues: Chaperone protein HscA homolog (620 aa).

The protein belongs to the heat shock protein 70 family.

Its function is as follows. Chaperone involved in the maturation of iron-sulfur cluster-containing proteins. Has a low intrinsic ATPase activity which is markedly stimulated by HscB. In Shewanella woodyi (strain ATCC 51908 / MS32), this protein is Chaperone protein HscA homolog.